The following is a 353-amino-acid chain: tRNA pseudouridine synthase B (353 aa).

Asp-39 (nucleophile) is an active-site residue.

Belongs to the pseudouridine synthase TruB family. Type 1 subfamily.

The enzyme catalyses uridine(55) in tRNA = pseudouridine(55) in tRNA. Responsible for synthesis of pseudouridine from uracil-55 in the psi GC loop of transfer RNAs. This is tRNA pseudouridine synthase B from Wolbachia pipientis subsp. Culex pipiens (strain wPip).